A 908-amino-acid polypeptide reads, in one-letter code: Metabotropic glutamate receptor 8 (908 aa).

Residues 1–33 form the signal peptide; it reads MVCEGKRLASCPCFFLLTAKFYWILTMMQRTHS. Residues 34-583 are Extracellular-facing; that stretch reads QEYAHSIRVD…IIKLEWHSPW (550 aa). A disulfide bridge connects residues cysteine 64 and cysteine 106. An N-linked (GlcNAc...) asparagine glycan is attached at asparagine 95. L-glutamate is bound by residues serine 156, 177–179, and tyrosine 227; that span reads AST. 7 disulfide bridges follow: cysteine 246–cysteine 534, cysteine 369–cysteine 384, cysteine 424–cysteine 431, cysteine 516–cysteine 535, cysteine 520–cysteine 538, cysteine 541–cysteine 553, and cysteine 556–cysteine 569. A glycan (N-linked (GlcNAc...) asparagine) is linked at asparagine 298. Aspartate 309 contacts L-glutamate. Lysine 401 contacts L-glutamate. N-linked (GlcNAc...) asparagine glycosylation is found at asparagine 452 and asparagine 480. Asparagine 565 carries N-linked (GlcNAc...) asparagine glycosylation. A helical membrane pass occupies residues 584-608; the sequence is AVVPVFIAILGIIATTFVIVTFVRY. The Cytoplasmic portion of the chain corresponds to 609–620; it reads NDTPIVRASGRE. The helical transmembrane segment at 621–641 threads the bilayer; the sequence is LSYVLLTGIFLCYSITFLMIA. The Extracellular segment spans residues 642–647; that stretch reads APDTII. Residues 648–668 traverse the membrane as a helical segment; the sequence is CSFRRIFLGLGMCFSYAALLT. Residues 669–695 are Cytoplasmic-facing; sequence KTNRIHRIFEQGKKSVTAPKFISPASQ. Residues 696-716 form a helical membrane-spanning segment; it reads LVITFSLISVQLLGVFVWFVV. Residues 717–746 are Extracellular-facing; sequence DPPHTIIDYGEQRTLDPENARGVLKCDISD. A helical membrane pass occupies residues 747 to 768; sequence LSLICSLGYSILLMVTCTVYAI. Residues 769–781 are Cytoplasmic-facing; the sequence is KTRGVPETFNEAK. Residues 782–803 form a helical membrane-spanning segment; it reads PIGFTMYTTCIIWLAFIPIFFG. Residues 804–818 are Extracellular-facing; it reads TAQSAEKMYIQTTTL. The helical transmembrane segment at 819-843 threads the bilayer; the sequence is TVSMSLSASVSLGMLYMPKVYIIIF. The Cytoplasmic segment spans residues 844–908; the sequence is HPEQNVQKRK…TYISYSNHSI (65 aa). Lysine 882 participates in a covalent cross-link: Glycyl lysine isopeptide (Lys-Gly) (interchain with G-Cter in SUMO1).

This sequence belongs to the G-protein coupled receptor 3 family. As to quaternary structure, interacts with PICK1. Prominent expression in olfactory bulb, pontine gray, lateral reticular nucleus of the thalamus, and piriform cortex. Less abundant expression incerebral cortex, hippocampus, cerebellum, and mammillary body.

Its subcellular location is the cell membrane. Its function is as follows. G-protein coupled receptor for glutamate. Ligand binding causes a conformation change that triggers signaling via guanine nucleotide-binding proteins (G proteins) and modulates the activity of down-stream effectors. Signaling inhibits adenylate cyclase activity. The sequence is that of Metabotropic glutamate receptor 8 (Grm8) from Rattus norvegicus (Rat).